A 314-amino-acid chain; its full sequence is MKDLFILSGPTAVGKTEISLNLAKALRGEVISSDSMQIYKHMDIGSAKIFEEERQGIPHHLIDVVEPWENFSVAEYKNIAENKIEEIYNRDNIPMLVGGTGLYINSIIYNYSFTDANKDNDYRDYLEKLAKEKGKEYIHSLLKDIDEYSYNNLHYNNLKRVIRALEVYKVTGKPMSQYAKEEKENLFNIPYSIYYFVLYMDRDKLYDKINMRVDRMLQEGLLDEVKELKEMGCNETMQSMQGIGYKELLYYLNGEISFNEAVYLIKKGSRNYAKRQLTWFRRDPRAIWINKDEFENDDAIVKEILNKFNKLKGF.

9 to 16 (GPTAVGKT) is an ATP binding site. 11-16 (TAVGKT) is a substrate binding site. Residues 34–37 (DSMQ) are interaction with substrate tRNA.

The protein belongs to the IPP transferase family. Monomer. Mg(2+) serves as cofactor.

It catalyses the reaction adenosine(37) in tRNA + dimethylallyl diphosphate = N(6)-dimethylallyladenosine(37) in tRNA + diphosphate. In terms of biological role, catalyzes the transfer of a dimethylallyl group onto the adenine at position 37 in tRNAs that read codons beginning with uridine, leading to the formation of N6-(dimethylallyl)adenosine (i(6)A). The chain is tRNA dimethylallyltransferase from Clostridium tetani (strain Massachusetts / E88).